The following is a 430-amino-acid chain: Adenylosuccinate synthetase (430 aa).

Residues 13–19 and 41–43 contribute to the GTP site; these read GDEGKGK and GHT. The Proton acceptor role is filled by Asp14. Asp14 and Gly41 together coordinate Mg(2+). IMP contacts are provided by residues 14–17, 39–42, Thr130, Arg144, Gln225, Thr240, and Arg304; these read DEGK and NAGH. The Proton donor role is filled by His42. 300-306 lines the substrate pocket; that stretch reads STTGRKR. Residues Arg306, 332–334, and 414–416 each bind GTP; these read KLD and STG.

The protein belongs to the adenylosuccinate synthetase family. In terms of assembly, homodimer. The cofactor is Mg(2+).

It is found in the cytoplasm. It carries out the reaction IMP + L-aspartate + GTP = N(6)-(1,2-dicarboxyethyl)-AMP + GDP + phosphate + 2 H(+). It functions in the pathway purine metabolism; AMP biosynthesis via de novo pathway; AMP from IMP: step 1/2. In terms of biological role, plays an important role in the de novo pathway of purine nucleotide biosynthesis. Catalyzes the first committed step in the biosynthesis of AMP from IMP. This is Adenylosuccinate synthetase from Buchnera aphidicola subsp. Schizaphis graminum (strain Sg).